We begin with the raw amino-acid sequence, 235 residues long: Geranylgeranylglyceryl phosphate synthase (235 aa).

Lys13 lines the sn-glycerol 1-phosphate pocket. Residues Asp15 and Thr42 each contribute to the Mg(2+) site. Residues 162–167 (YVEYSG), Gly192, and 212–213 (GD) contribute to the sn-glycerol 1-phosphate site.

It belongs to the GGGP/HepGP synthase family. Group I subfamily. The cofactor is Mg(2+).

Its subcellular location is the cytoplasm. It catalyses the reaction sn-glycerol 1-phosphate + (2E,6E,10E)-geranylgeranyl diphosphate = sn-3-O-(geranylgeranyl)glycerol 1-phosphate + diphosphate. The protein operates within membrane lipid metabolism; glycerophospholipid metabolism. In terms of biological role, prenyltransferase that catalyzes the transfer of the geranylgeranyl moiety of geranylgeranyl diphosphate (GGPP) to the C3 hydroxyl of sn-glycerol-1-phosphate (G1P). This reaction is the first ether-bond-formation step in the biosynthesis of archaeal membrane lipids. This chain is Geranylgeranylglyceryl phosphate synthase, found in Natronomonas pharaonis (strain ATCC 35678 / DSM 2160 / CIP 103997 / JCM 8858 / NBRC 14720 / NCIMB 2260 / Gabara) (Halobacterium pharaonis).